We begin with the raw amino-acid sequence, 153 residues long: Succinate dehydrogenase assembly factor 2, mitochondrial (153 aa).

Belongs to the SDHAF2 family. Interacts with the flavoprotein subunit within the SDH catalytic dimer.

It is found in the mitochondrion matrix. In terms of biological role, plays an essential role in the assembly of succinate dehydrogenase (SDH), an enzyme complex (also referred to as respiratory complex II) that is a component of both the tricarboxylic acid (TCA) cycle and the mitochondrial electron transport chain, and which couples the oxidation of succinate to fumarate with the reduction of ubiquinone (coenzyme Q) to ubiquinol. Required for flavinylation (covalent attachment of FAD) of the flavoprotein subunit of the SDH catalytic dimer. The chain is Succinate dehydrogenase assembly factor 2, mitochondrial from Candida glabrata (strain ATCC 2001 / BCRC 20586 / JCM 3761 / NBRC 0622 / NRRL Y-65 / CBS 138) (Yeast).